A 598-amino-acid chain; its full sequence is UvrABC system protein C (598 aa).

Residues 14-91 enclose the GIY-YIG domain; the sequence is DSPGCYLHKD…IQKNMPKYNI (78 aa). The UVR domain maps to 196-231; that stretch reads DKIIEDLRSKMLAASEEMAFERAAEYRDLISGIATM.

It belongs to the UvrC family. In terms of assembly, interacts with UvrB in an incision complex.

The protein resides in the cytoplasm. Its function is as follows. The UvrABC repair system catalyzes the recognition and processing of DNA lesions. UvrC both incises the 5' and 3' sides of the lesion. The N-terminal half is responsible for the 3' incision and the C-terminal half is responsible for the 5' incision. In Streptococcus pyogenes serotype M3 (strain ATCC BAA-595 / MGAS315), this protein is UvrABC system protein C.